The chain runs to 382 residues: Transforming growth factor beta-1 proprotein (382 aa).

An N-terminal signal peptide occupies residues 1 to 21; sequence MEVLWMLLVLLVLHLSSLAMS. Residues 22-65 form a straightjacket domain region; sequence LSTCKAVDMEEVRKRRIEAIRGQILSKLKLDKTPDVDSEKMTVP. Residues 66–263 are arm domain; sequence SEAIFLYNST…SMPAERIDTV (198 aa). N-linked (GlcNAc...) asparagine glycans are attached at residues Asn-73, Asn-123, and Asn-166. The segment at 218 to 242 is bowtie tail; that stretch reads PTPQAKDIDIEGFPALRGDLASLSS. Residues 234–236 carry the Cell attachment site motif; the sequence is RGD. Cystine bridges form between Cys-277–Cys-286, Cys-285–Cys-348, Cys-314–Cys-379, and Cys-318–Cys-381.

This sequence belongs to the TGF-beta family. Latency-associated peptide: Homodimer; disulfide-linked. Latency-associated peptide: Interacts with Transforming growth factor beta-1 (TGF-beta-1) chain; interaction is non-covalent and maintains (TGF-beta-1) in a latent state; each Latency-associated peptide (LAP) monomer interacts with TGF-beta-1 in the other monomer. Transforming growth factor beta-1: Homodimer; disulfide-linked. Transforming growth factor beta-1: Interacts with TGF-beta receptors (tgfbr1 and tgfbr2), leading to signal transduction. Transforming growth factor beta-1 proprotein: The precursor proprotein is cleaved in the Golgi apparatus to form Transforming growth factor beta-1 (TGF-beta-1) and Latency-associated peptide (LAP) chains, which remain non-covalently linked, rendering TGF-beta-1 inactive.

Its subcellular location is the secreted. It is found in the extracellular space. The protein resides in the extracellular matrix. Functionally, transforming growth factor beta-1 proprotein: Precursor of the Latency-associated peptide (LAP) and Transforming growth factor beta-1 (TGF-beta-1) chains, which constitute the regulatory and active subunit of TGF-beta-1, respectively. In terms of biological role, required to maintain the Transforming growth factor beta-1 (TGF-beta-1) chain in a latent state during storage in extracellular matrix. Associates non-covalently with TGF-beta-1 and regulates its activation via interaction with 'milieu molecules', such as LTBP1, LRRC32/GARP and LRRC33/NRROS, that control activation of TGF-beta-1. Interaction with integrins (ITGAV:ITGB6 or ITGAV:ITGB8) results in distortion of the Latency-associated peptide chain and subsequent release of the active TGF-beta-1. Its function is as follows. Transforming growth factor beta-1: Multifunctional protein that regulates the growth and differentiation of various cell types and is involved in various processes, such as normal development, immune function, microglia function and responses to neurodegeneration. Activation into mature form follows different steps: following cleavage of the proprotein in the Golgi apparatus, Latency-associated peptide (LAP) and Transforming growth factor beta-1 (TGF-beta-1) chains remain non-covalently linked rendering TGF-beta-1 inactive during storage in extracellular matrix. At the same time, LAP chain interacts with 'milieu molecules', such as ltbp1, lrrc32/garp and lrrc33/nrros that control activation of TGF-beta-1 and maintain it in a latent state during storage in extracellular milieus. TGF-beta-1 is released from LAP by integrins (ITGAV:ITGB6 or ITGAV:ITGB8): integrin-binding to LAP stabilizes an alternative conformation of the LAP bowtie tail and results in distortion of the LAP chain and subsequent release of the active TGF-beta-1. Once activated following release of LAP, TGF-beta-1 acts by binding to TGF-beta receptors (tgfbr1 and tgfbr2), which transduce signal. While expressed by many cells types, TGF-beta-1 only has a very localized range of action within cell environment thanks to fine regulation of its activation by Latency-associated peptide chain (LAP) and 'milieu molecules'. Plays an important role in bone remodeling: acts as a potent stimulator of osteoblastic bone formation. Can promote either T-helper 17 cells (Th17) or regulatory T-cells (Treg) lineage differentiation in a concentration-dependent manner. Can induce epithelial-to-mesenchymal transition (EMT) and cell migration in various cell types. The sequence is that of Transforming growth factor beta-1 proprotein (tgfb1) from Xenopus laevis (African clawed frog).